A 146-amino-acid chain; its full sequence is Prolactin-inducible protein homolog (146 aa).

A signal peptide spans 1 to 28 (MRLLQFLFRASPATLLLVLCLHLGANKA). Residue Gln-29 is modified to Pyrrolidone carboxylic acid. 2 disulfides stabilise this stretch: Cys-65-Cys-91 and Cys-89-Cys-123. An N-linked (GlcNAc...) asparagine glycan is attached at Asn-105.

The protein belongs to the PIP family. As to quaternary structure, monomer. Interacts with AZGP1.

Its subcellular location is the secreted. In Macaca fuscata fuscata (Japanese macaque), this protein is Prolactin-inducible protein homolog (PIP).